The following is a 499-amino-acid chain: Proline--tRNA ligase (499 aa).

This sequence belongs to the class-II aminoacyl-tRNA synthetase family. ProS type 3 subfamily. Homodimer.

Its subcellular location is the cytoplasm. The enzyme catalyses tRNA(Pro) + L-proline + ATP = L-prolyl-tRNA(Pro) + AMP + diphosphate. Functionally, catalyzes the attachment of proline to tRNA(Pro) in a two-step reaction: proline is first activated by ATP to form Pro-AMP and then transferred to the acceptor end of tRNA(Pro). This is Proline--tRNA ligase from Bdellovibrio bacteriovorus (strain ATCC 15356 / DSM 50701 / NCIMB 9529 / HD100).